The sequence spans 153 residues: Ribosome maturation factor RimP (153 aa).

Belongs to the RimP family.

It localises to the cytoplasm. In terms of biological role, required for maturation of 30S ribosomal subunits. The protein is Ribosome maturation factor RimP of Psychromonas ingrahamii (strain DSM 17664 / CCUG 51855 / 37).